The sequence spans 159 residues: Succinate dehydrogenase assembly factor 2, mitochondrial (159 aa).

The transit peptide at 1-14 (MASFCLSRCCALRG) directs the protein to the mitochondrion.

It belongs to the SDHAF2 family. As to quaternary structure, interacts with the flavoprotein subunit within the SDH catalytic dimer.

The protein localises to the mitochondrion matrix. In terms of biological role, plays an essential role in the assembly of succinate dehydrogenase (SDH), an enzyme complex (also referred to as respiratory complex II) that is a component of both the tricarboxylic acid (TCA) cycle and the mitochondrial electron transport chain, and which couples the oxidation of succinate to fumarate with the reduction of ubiquinone (coenzyme Q) to ubiquinol. Required for flavinylation (covalent attachment of FAD) of the flavoprotein subunit of the SDH catalytic dimer. This Culex quinquefasciatus (Southern house mosquito) protein is Succinate dehydrogenase assembly factor 2, mitochondrial.